The primary structure comprises 121 residues: uncharacterized protein (121 aa).

The signal sequence occupies residues 1–19; that stretch reads MKKFALATIFALATTSAFA.

This sequence to E.coli YgiW.

The protein localises to the periplasm. This is an uncharacterized protein from Haemophilus influenzae (strain ATCC 51907 / DSM 11121 / KW20 / Rd).